Reading from the N-terminus, the 101-residue chain is Anti-lipopolysaccharide factor (101 aa).

A disulfide bridge connects residues cysteine 31 and cysteine 52.

In terms of biological role, binds tightly to LPS and thus specifically inhibits the LPS-mediated activation of the hemolymph coagulation. It has a strong antibacterial effect especially on the growth of Gram-negative bacteria. The polypeptide is Anti-lipopolysaccharide factor (Limulus polyphemus (Atlantic horseshoe crab)).